The chain runs to 243 residues: Polycomb group RING finger protein 1 (243 aa).

K12 is covalently cross-linked (Glycyl lysine isopeptide (Lys-Gly) (interchain with G-Cter in SUMO2)). The segment at 35–74 (CCLCAGYFVDATTITECLHTFCKSCIVKYLQTSKYCPMCN) adopts an RING-type zinc-finger fold. Residues 74-231 (NIKIHETQPL…LSRWFGKPSP (158 aa)) form a necessary for repressor activity region. A Glycyl lysine isopeptide (Lys-Gly) (interchain with G-Cter in SUMO2) cross-link involves residue K76. The tract at residues 138–239 (LPFTSFDHYY…SPLLLQYSVK (102 aa)) is required for the interaction with the KDM2B-SKP1 heterodimeric complex. Positions 151 to 239 (EQLSLCLERL…SPLLLQYSVK (89 aa)) are RING-finger and WD40-associated ubiquitin-like domain (RAWUL); sufficient for interaction with BCOR and BCORL1.

In terms of assembly, interacts with BCORL1, forming heterodimers. The PCGF1-BCORL1 heterodimeric complex interacts with the KDM2B-SKP1 heterodimeric complex to form a homotetrameric polycomb repression complex 1 (PRC1.1). Component of the repressive BCOR complex containing a Polycomb group subcomplex at least composed of RYBP, RING1 and RNF2/RING2. Specifically interacts with BCOR, RING1 and RNF2/RING2. Component of a PRC1-like complex. Interacts with CBX6, CBX7 and CBX8. Interacts with DPPA4, NANOG, POU5F1 and RYBP. Highly expressed in brain, cerebellum, heart and testis.

It localises to the nucleus. In terms of biological role, component of the Polycomb group (PcG) multiprotein BCOR complex, a complex required to maintain the transcriptionally repressive state of some genes, such as BCL6 and the cyclin-dependent kinase inhibitor, CDKN1A. Transcriptional repressor that may be targeted to the DNA by BCL6; this transcription repressor activity may be related to PKC signaling pathway. Represses CDKN1A expression by binding to its promoter, and this repression is dependent on the retinoic acid response element (RARE element). Promotes cell cycle progression and enhances cell proliferation as well. May have a positive role in tumor cell growth by down-regulating CDKN1A. Component of a Polycomb group (PcG) multiprotein PRC1-like complex, a complex class required to maintain the transcriptionally repressive state of many genes, including Hox genes, throughout development. PcG PRC1 complex acts via chromatin remodeling and modification of histones; it mediates monoubiquitination of histone H2A 'Lys-119', rendering chromatin heritably changed in its expressibility. Within the PRC1-like complex, regulates RNF2 ubiquitin ligase activity. Regulates the expression of DPPA4 and NANOG in the NT2 embryonic carcinoma cells. The chain is Polycomb group RING finger protein 1 (Pcgf1) from Rattus norvegicus (Rat).